The primary structure comprises 1408 residues: DNA-directed RNA polymerase subunit beta'' (1408 aa).

Belongs to the RNA polymerase beta' chain family. RpoC2 subfamily. As to quaternary structure, in plastids the minimal PEP RNA polymerase catalytic core is composed of four subunits: alpha, beta, beta', and beta''. When a (nuclear-encoded) sigma factor is associated with the core the holoenzyme is formed, which can initiate transcription.

It localises to the plastid. Its subcellular location is the chloroplast. The enzyme catalyses RNA(n) + a ribonucleoside 5'-triphosphate = RNA(n+1) + diphosphate. Functionally, DNA-dependent RNA polymerase catalyzes the transcription of DNA into RNA using the four ribonucleoside triphosphates as substrates. The chain is DNA-directed RNA polymerase subunit beta'' from Psilotum nudum (Whisk fern).